Here is a 286-residue protein sequence, read N- to C-terminus: Transcription factor bHLH11 (286 aa).

Positions 1–34 (MDQPMKPKTCSESDFADDSSASSSSSSGQNLRGA) are disordered. The segment covering 18–27 (DSSASSSSSS) has biased composition (low complexity). A bHLH domain is found at 44 to 94 (AVCSQKAEREKLRRDKLKEQFLELGNALDPNRPKSDKASVLTDTIQMLKDV). 2 disordered regions span residues 182–202 (EQQA…MKQD) and 244–286 (QQDV…MLKP). Low complexity-rich tracts occupy residues 183–198 (QQAS…ADAS) and 255–269 (SLTT…YSLS). Residues 270–279 (QAVQDSSPGT) show a composition bias toward polar residues.

Homodimer. As to expression, expressed consitutively in roots, leaves, stems, and flowers.

The protein resides in the nucleus. The protein is Transcription factor bHLH11 (BHLH11) of Arabidopsis thaliana (Mouse-ear cress).